A 420-amino-acid polypeptide reads, in one-letter code: Gamma-glutamyl phosphate reductase (420 aa).

It belongs to the gamma-glutamyl phosphate reductase family.

The protein localises to the cytoplasm. The enzyme catalyses L-glutamate 5-semialdehyde + phosphate + NADP(+) = L-glutamyl 5-phosphate + NADPH + H(+). It participates in amino-acid biosynthesis; L-proline biosynthesis; L-glutamate 5-semialdehyde from L-glutamate: step 2/2. Catalyzes the NADPH-dependent reduction of L-glutamate 5-phosphate into L-glutamate 5-semialdehyde and phosphate. The product spontaneously undergoes cyclization to form 1-pyrroline-5-carboxylate. In Laribacter hongkongensis (strain HLHK9), this protein is Gamma-glutamyl phosphate reductase.